A 182-amino-acid chain; its full sequence is Cytidylate kinase (182 aa).

Position 7-15 (7-15 (GPPGSGKSS)) interacts with ATP.

This sequence belongs to the cytidylate kinase family. Type 2 subfamily.

Its subcellular location is the cytoplasm. It catalyses the reaction CMP + ATP = CDP + ADP. The catalysed reaction is dCMP + ATP = dCDP + ADP. This is Cytidylate kinase (cmk) from Sulfolobus acidocaldarius (strain ATCC 33909 / DSM 639 / JCM 8929 / NBRC 15157 / NCIMB 11770).